Here is a 481-residue protein sequence, read N- to C-terminus: Ribosomal protein uS12 methylthiotransferase RimO (481 aa).

The 111-residue stretch at 38-148 folds into the MTTase N-terminal domain; it reads NRIGFVSLGC…VLKHVHKYVP (111 aa). [4Fe-4S] cluster is bound by residues Cys-47, Cys-83, Cys-112, Cys-180, Cys-184, and Cys-187. The Radical SAM core domain maps to 166-403; that stretch reads LTPKHYAYLK…MEVQAEISAE (238 aa). The TRAM domain maps to 406–472; that stretch reads ARFVGRTMDI…EHDLWAELVD (67 aa).

Belongs to the methylthiotransferase family. RimO subfamily. It depends on [4Fe-4S] cluster as a cofactor.

It is found in the cytoplasm. It catalyses the reaction L-aspartate(89)-[ribosomal protein uS12]-hydrogen + (sulfur carrier)-SH + AH2 + 2 S-adenosyl-L-methionine = 3-methylsulfanyl-L-aspartate(89)-[ribosomal protein uS12]-hydrogen + (sulfur carrier)-H + 5'-deoxyadenosine + L-methionine + A + S-adenosyl-L-homocysteine + 2 H(+). Its function is as follows. Catalyzes the methylthiolation of an aspartic acid residue of ribosomal protein uS12. This is Ribosomal protein uS12 methylthiotransferase RimO from Shewanella oneidensis (strain ATCC 700550 / JCM 31522 / CIP 106686 / LMG 19005 / NCIMB 14063 / MR-1).